The following is a 314-amino-acid chain: GTP cyclohydrolase FolE2 (314 aa).

The tract at residues 290-314 is disordered; sequence DASAWSAPQAAAPDQQESFATGNER. Residues 291–304 are compositionally biased toward low complexity; that stretch reads ASAWSAPQAAAPDQ. The segment covering 305–314 has biased composition (polar residues); sequence QESFATGNER.

The protein belongs to the GTP cyclohydrolase IV family.

The enzyme catalyses GTP + H2O = 7,8-dihydroneopterin 3'-triphosphate + formate + H(+). It functions in the pathway cofactor biosynthesis; 7,8-dihydroneopterin triphosphate biosynthesis; 7,8-dihydroneopterin triphosphate from GTP: step 1/1. Its function is as follows. Converts GTP to 7,8-dihydroneopterin triphosphate. The polypeptide is GTP cyclohydrolase FolE2 (Pseudomonas putida (strain ATCC 47054 / DSM 6125 / CFBP 8728 / NCIMB 11950 / KT2440)).